A 512-amino-acid chain; its full sequence is Cytochrome P450 26B1 (512 aa).

Cysteine 441 provides a ligand contact to heme.

The protein belongs to the cytochrome P450 family. Heme serves as cofactor.

It localises to the endoplasmic reticulum membrane. The protein resides in the microsome membrane. The enzyme catalyses all-trans-retinoate + reduced [NADPH--hemoprotein reductase] + O2 = all-trans-4-hydroxyretinoate + oxidized [NADPH--hemoprotein reductase] + H2O + H(+). It carries out the reaction all-trans-retinoate + reduced [NADPH--hemoprotein reductase] + O2 = all-trans-18-hydroxyretinoate + oxidized [NADPH--hemoprotein reductase] + H2O + H(+). Functionally, a cytochrome P450 monooxygenase involved in the metabolism of retinoates (RAs), the active metabolites of vitamin A, and critical signaling molecules in animals. RAs exist as at least four different isomers: all-trans-RA (atRA), 9-cis-RA, 13-cis-RA, and 9,13-dicis-RA, where atRA is considered to be the biologically active isomer, although 9-cis-RA and 13-cis-RA also have activity. Catalyzes the hydroxylation of atRA primarily at C-4 and C-18, thereby contributing to the regulation of atRA homeostasis and signaling. Hydroxylation of atRA limits its biological activity and initiates a degradative process leading to its eventual elimination. Involved in the convertion of atRA to all-trans-4-oxo-RA. Can oxidize all-trans-13,14-dihydroretinoate (DRA) to metabolites which could include all-trans-4-oxo-DRA, all-trans-4-hydroxy-DRA, all-trans-5,8-epoxy-DRA, and all-trans-18-hydroxy-DRA. Shows preference for the following substrates: atRA &gt; 9-cis-RA &gt; 13-cis-RA. Plays a central role in germ cell development: acts by degrading RAs in the developing testis, preventing STRA8 expression, thereby leading to delay of meiosis. Required for the maintenance of the undifferentiated state of male germ cells during embryonic development in Sertoli cells, inducing arrest in G0 phase of the cell cycle and preventing meiotic entry. Plays a role in skeletal development, both at the level of patterning and in the ossification of bone and the establishment of some synovial joints. Essential for postnatal survival. Its function is as follows. Also has a significant activity in oxidation of tazarotenic acid and may therefore metabolize that xenobiotic in vivo. The sequence is that of Cytochrome P450 26B1 (Cyp26b1) from Rattus norvegicus (Rat).